The chain runs to 360 residues: Pyrimidine monooxygenase RutA (360 aa).

FMN-binding positions include 49–50 (IK), Asn-115, Glu-124, 140–141 (RY), and Ser-190.

The protein belongs to the NtaA/SnaA/DszA monooxygenase family. RutA subfamily.

The catalysed reaction is uracil + FMNH2 + NADH + O2 = (Z)-3-ureidoacrylate + FMN + NAD(+) + H2O + H(+). It catalyses the reaction thymine + FMNH2 + NADH + O2 = (Z)-2-methylureidoacrylate + FMN + NAD(+) + H2O + H(+). Catalyzes the pyrimidine ring opening between N-3 and C-4 by an unusual flavin hydroperoxide-catalyzed mechanism, adding oxygen atoms in the process to yield ureidoacrylate peracid, that immediately reacts with FMN forming ureidoacrylate and FMN-N(5)-oxide. The FMN-N(5)-oxide reacts spontaneously with NADH to produce FMN. Requires the flavin reductase RutF to regenerate FMN in vivo. In Pseudomonas savastanoi pv. phaseolicola (strain 1448A / Race 6) (Pseudomonas syringae pv. phaseolicola (strain 1448A / Race 6)), this protein is Pyrimidine monooxygenase RutA.